The following is a 547-amino-acid chain: Chaperonin GroEL 2 (547 aa).

ATP contacts are provided by residues 30 to 33 (TLGP), Lys-51, 87 to 91 (DGTTT), Gly-415, 479 to 481 (NAA), and Asp-495. The tract at residues 525–547 (PKEESAAPAGGGMGGMGGMGGMM) is disordered. The span at 533-547 (AGGGMGGMGGMGGMM) shows a compositional bias: gly residues.

It belongs to the chaperonin (HSP60) family. Forms a cylinder of 14 subunits composed of two heptameric rings stacked back-to-back. Interacts with the co-chaperonin GroES.

It localises to the cytoplasm. The enzyme catalyses ATP + H2O + a folded polypeptide = ADP + phosphate + an unfolded polypeptide.. Its function is as follows. Together with its co-chaperonin GroES, plays an essential role in assisting protein folding. The GroEL-GroES system forms a nano-cage that allows encapsulation of the non-native substrate proteins and provides a physical environment optimized to promote and accelerate protein folding. The sequence is that of Chaperonin GroEL 2 from Anaeromyxobacter dehalogenans (strain 2CP-C).